A 418-amino-acid chain; its full sequence is Argininosuccinate synthase (418 aa).

Ala-16–Ser-24 is an ATP binding site. Tyr-95 serves as a coordination point for L-citrulline. Residue Gly-125 coordinates ATP. Thr-127, Asn-131, and Asp-132 together coordinate L-aspartate. Residue Asn-131 coordinates L-citrulline. Residues Arg-135, Ser-183, Glu-267, and Tyr-279 each coordinate L-citrulline.

Belongs to the argininosuccinate synthase family. Type 1 subfamily. Homotetramer.

It localises to the cytoplasm. The enzyme catalyses L-citrulline + L-aspartate + ATP = 2-(N(omega)-L-arginino)succinate + AMP + diphosphate + H(+). The protein operates within amino-acid biosynthesis; L-arginine biosynthesis; L-arginine from L-ornithine and carbamoyl phosphate: step 2/3. This chain is Argininosuccinate synthase, found in Bifidobacterium adolescentis (strain ATCC 15703 / DSM 20083 / NCTC 11814 / E194a).